A 316-amino-acid polypeptide reads, in one-letter code: Endochitinase 2 (316 aa).

Residues 1-18 form the signal peptide; the sequence is EFTTLFLLFSVLLLSASA. The Chitin-binding type-1 domain occupies 19-60; that stretch reads EQCGSQAGGALCASGLCCSKFGWCGNTNDYCGPGNCQSQCPG. Intrachain disulfides connect C21-C36, C30-C42, C35-C49, C54-C58, C87-C150, C162-C170, and C269-C301. E132 acts as the Proton donor in catalysis. Residues 310–316 constitute a propeptide, removed in mature form, vacuolar targeting; it reads GLLVDTV.

The protein belongs to the glycosyl hydrolase 19 family. Chitinase class I subfamily.

It localises to the vacuole. The enzyme catalyses Random endo-hydrolysis of N-acetyl-beta-D-glucosaminide (1-&gt;4)-beta-linkages in chitin and chitodextrins.. Functionally, defense against chitin-containing fungal pathogens. This chain is Endochitinase 2 (CHTB2), found in Solanum tuberosum (Potato).